The primary structure comprises 352 residues: DNA polymerase IV (352 aa).

One can recognise a UmuC domain in the interval 3-187 (VLFVDFDYFY…LDIADVPGIG (185 aa)). Positions 7 and 105 each coordinate Mg(2+). The active site involves Glu106.

This sequence belongs to the DNA polymerase type-Y family. Monomer. Interacts with the PCNA heterotrimer via PCNA1. Mg(2+) serves as cofactor.

The protein localises to the cytoplasm. The catalysed reaction is DNA(n) + a 2'-deoxyribonucleoside 5'-triphosphate = DNA(n+1) + diphosphate. Poorly processive, error-prone DNA polymerase involved in untargeted mutagenesis. Copies undamaged DNA at stalled replication forks, which arise in vivo from mismatched or misaligned primer ends. These misaligned primers can be extended by PolIV. Exhibits no 3'-5' exonuclease (proofreading) activity. It is involved in translesional synthesis. The sequence is that of DNA polymerase IV (dbh) from Saccharolobus solfataricus (strain ATCC 35092 / DSM 1617 / JCM 11322 / P2) (Sulfolobus solfataricus).